A 236-amino-acid polypeptide reads, in one-letter code: Small ribosomal subunit protein uS2c (236 aa).

This sequence belongs to the universal ribosomal protein uS2 family.

It is found in the plastid. The protein resides in the chloroplast. In Amborella trichopoda, this protein is Small ribosomal subunit protein uS2c (rps2).